A 161-amino-acid polypeptide reads, in one-letter code: Urease accessory protein UreE (161 aa).

Residues 138 to 161 are disordered; it reads RGAYHAHGGHSHDHGQGHHHHDHG.

Belongs to the UreE family.

It is found in the cytoplasm. In terms of biological role, involved in urease metallocenter assembly. Binds nickel. Probably functions as a nickel donor during metallocenter assembly. This Agrobacterium fabrum (strain C58 / ATCC 33970) (Agrobacterium tumefaciens (strain C58)) protein is Urease accessory protein UreE.